Here is a 156-residue protein sequence, read N- to C-terminus: Ribosomal RNA large subunit methyltransferase H (156 aa).

Residues Leu-73, Gly-104, and 123–128 (LSSLTL) each bind S-adenosyl-L-methionine.

It belongs to the RNA methyltransferase RlmH family. Homodimer.

The protein resides in the cytoplasm. It catalyses the reaction pseudouridine(1915) in 23S rRNA + S-adenosyl-L-methionine = N(3)-methylpseudouridine(1915) in 23S rRNA + S-adenosyl-L-homocysteine + H(+). Its function is as follows. Specifically methylates the pseudouridine at position 1915 (m3Psi1915) in 23S rRNA. This is Ribosomal RNA large subunit methyltransferase H from Bordetella avium (strain 197N).